The following is a 160-amino-acid chain: Major pollen allergen Bet v 1-F/I (160 aa).

Brassinolide is bound by residues K55, Y82, Y84, and N101.

It belongs to the BetVI family.

The protein resides in the cytoplasm. Functionally, may be a general steroid carrier protein. This is Major pollen allergen Bet v 1-F/I (BETV1F) from Betula pendula (European white birch).